A 382-amino-acid chain; its full sequence is Alanine racemase (382 aa).

Lys39 serves as the catalytic Proton acceptor; specific for D-alanine. The residue at position 39 (Lys39) is an N6-(pyridoxal phosphate)lysine. Arg138 lines the substrate pocket. The Proton acceptor; specific for L-alanine role is filled by Tyr265. Met312 serves as a coordination point for substrate.

It belongs to the alanine racemase family. Pyridoxal 5'-phosphate is required as a cofactor.

The enzyme catalyses L-alanine = D-alanine. The protein operates within amino-acid biosynthesis; D-alanine biosynthesis; D-alanine from L-alanine: step 1/1. In terms of biological role, catalyzes the interconversion of L-alanine and D-alanine. May also act on other amino acids. This chain is Alanine racemase (alr), found in Staphylococcus epidermidis (strain ATCC 35984 / DSM 28319 / BCRC 17069 / CCUG 31568 / BM 3577 / RP62A).